Here is a 393-residue protein sequence, read N- to C-terminus: tRNA(Met) cytidine acetate ligase (393 aa).

ATP contacts are provided by Gly-81, Asn-142, and Arg-167.

This sequence belongs to the TmcAL family.

Its subcellular location is the cytoplasm. The enzyme catalyses cytidine(34) in elongator tRNA(Met) + acetate + ATP = N(4)-acetylcytidine(34) in elongator tRNA(Met) + AMP + diphosphate. Functionally, catalyzes the formation of N(4)-acetylcytidine (ac(4)C) at the wobble position of elongator tRNA(Met), using acetate and ATP as substrates. First activates an acetate ion to form acetyladenylate (Ac-AMP) and then transfers the acetyl group to tRNA to form ac(4)C34. The protein is tRNA(Met) cytidine acetate ligase of Bacillus thuringiensis (strain Al Hakam).